The chain runs to 955 residues: MTRKNTTTNPWAKFHGPNLGYVIEQYDLYVTGAGSVDPELQELFEIFGAPSFQDDVVTGDNTATHFSPQNTGNIEKILKVVQLVEQIRSFGHTLAHINPMEDAANGQSLLEKAMNELSDADLKAIPAKTVWQDAPEGIHTALDVIHRLKEVYTQTLAYEFSHIQDSEERAWLHQMVESNSLRQPLSNQKRTALLKRLTAVEGFEQFLHKTFVGQKRFSIEGVDMLVPVLDEIVLEGAKNGVEDVMIGMAHRGRLSVLAHVLEKPYSHMFAEFKHAKIEGAVANSGWTGDVKYHLGREQVVSNEEVSTRVTLANNPSHLEFVNPVVEGFARAAQENRKKSGLPEQDTSKSFVILVHGDAAFPGQGIVSETLNLSRLNAYQTGGTIHVIANNAVGFTTDSYDSRSTKYSSDLAKGFDIPIVHVNADDPEACLAAANLAIQYRMLFKKDFLIDLIGYRRYGHNEMDDPAVTQPQVYKKIKNHPTVRAIYADQLQAAGVLNADEIETITQFTQEQLKSDYAQVPPADTSDATIHVKVPDVVAKGIQSIDTGVELDSLRAINEGLLSWPEGFNVYPKVKKILERRKDALEENGKIEWALAESLAFASILQEGTPIRLTGQDSQRGTFAHRHIVLHDTDTNETYSPLHRLPNINASFSVHNSPLSEAAVVGYEYGYNVFAPETLVMWEAQYGDFSNTAQALFDQYVSAGRAKWGQKSGLVLLLPHGYEGQGPEHSSARPERFLQLAAENNWTVANLTSAAQYFHILRRQASILGTEAVRPLVLMTPKSLLRHPLTLSTASQLSEGRFQPALEQENLGMKPNKVKRLVLSTGKMAIDLAAEIESGKHEYNLDEIHIVRIEQLYPFPAEKVQSIIKRFKNLEEIIWVQEEPRNMGAWHYMAPILFELAGDKVKTGYIGRPDRSSPSGGDPFAHKAEQELIVSHALDVKYNFRQDKLEIEVFSN.

It belongs to the alpha-ketoglutarate dehydrogenase family. Homodimer. Part of the 2-oxoglutarate dehydrogenase (OGDH) complex composed of E1 (2-oxoglutarate dehydrogenase), E2 (dihydrolipoamide succinyltransferase) and E3 (dihydrolipoamide dehydrogenase); the complex contains multiple copies of the three enzymatic components (E1, E2 and E3). Thiamine diphosphate is required as a cofactor.

It catalyses the reaction N(6)-[(R)-lipoyl]-L-lysyl-[protein] + 2-oxoglutarate + H(+) = N(6)-[(R)-S(8)-succinyldihydrolipoyl]-L-lysyl-[protein] + CO2. In terms of biological role, E1 component of the 2-oxoglutarate dehydrogenase (OGDH) complex which catalyzes the decarboxylation of 2-oxoglutarate, the first step in the conversion of 2-oxoglutarate to succinyl-CoA and CO(2). This is 2-oxoglutarate dehydrogenase E1 component from Bacillus cereus (strain AH187).